The chain runs to 285 residues: Bifunctional protein FolD (285 aa).

Residues 165 to 167 (GRS) and serine 190 contribute to the NADP(+) site.

This sequence belongs to the tetrahydrofolate dehydrogenase/cyclohydrolase family. In terms of assembly, homodimer.

The enzyme catalyses (6R)-5,10-methylene-5,6,7,8-tetrahydrofolate + NADP(+) = (6R)-5,10-methenyltetrahydrofolate + NADPH. It carries out the reaction (6R)-5,10-methenyltetrahydrofolate + H2O = (6R)-10-formyltetrahydrofolate + H(+). The protein operates within one-carbon metabolism; tetrahydrofolate interconversion. Its function is as follows. Catalyzes the oxidation of 5,10-methylenetetrahydrofolate to 5,10-methenyltetrahydrofolate and then the hydrolysis of 5,10-methenyltetrahydrofolate to 10-formyltetrahydrofolate. This Burkholderia ambifaria (strain ATCC BAA-244 / DSM 16087 / CCUG 44356 / LMG 19182 / AMMD) (Burkholderia cepacia (strain AMMD)) protein is Bifunctional protein FolD.